The following is a 242-amino-acid chain: Sugar fermentation stimulation protein homolog (242 aa).

This sequence belongs to the SfsA family.

This Enterococcus mundtii protein is Sugar fermentation stimulation protein homolog.